A 249-amino-acid chain; its full sequence is Protein obstructor-E (249 aa).

A signal peptide spans 1–21 (MAKILISALLCVAMFGSMALG). Residues 22 to 80 (SPECPTPNGRFASGDQCDSYTECQDGTPVEKLCPDGLLFHQRTKATGECTYAPYSTCKE) enclose the Chitin-binding type-2 1 domain. An intrachain disulfide couples cysteine 54 to cysteine 70. Asparagine 88 is a glycosylation site (N-linked (GlcNAc...) asparagine). Chitin-binding type-2 domains follow at residues 90 to 148 (TEEC…SCNA) and 170 to 227 (VDVS…ECYA). 2 disulfide bridges follow: cysteine 124–cysteine 137 and cysteine 203–cysteine 216.

Uniformly expressed throughout the cuticle of third instar larva.

It is found in the secreted. The protein resides in the extracellular space. Its subcellular location is the extracellular matrix. Chitin-binding protein that is important for the longitudinal contraction and lateral expansion of the larval cuticle during its conversion into the oval-shaped puparium case. Essential for survival to the second instar larval stage. Confers the orientated contractility and expandability of the larval cuticle by regulating the arrangement of chitin and the formation of supracellular ridges on the cuticle of third instar larvae. Essential for determining pupal body shape; required for the orientated shape change of the cuticle during metamorphosis which involves changes in the morphology of the supracellular ridges. Functionally, mainly involved in regulating pupal shape. Its function is as follows. Mainly involved in larvae survival, possibly by maintaining the normal morphology of the larval hindgut during development. This is Protein obstructor-E from Drosophila melanogaster (Fruit fly).